The primary structure comprises 415 residues: PRKCA-binding protein (415 aa).

The PDZ domain maps to 22–105 (KVTLQKDAQN…EVTIHYNKLQ (84 aa)). The Zn(2+) site is built by C44 and C46. A Phosphothreonine modification is found at T82. One can recognise an AH domain in the interval 144 to 357 (LCNDGLVKRL…CYAVLRDADV (214 aa)). The interval 376–415 (EEFTDGEEEEEEEDTAAGEPSRDTRGAAGPLDKGGSWCDS) is disordered. Positions 377–391 (EFTDGEEEEEEEDTA) are enriched in acidic residues. A lipid anchor (S-palmitoyl cysteine; by DHHC8) is attached at C413.

In terms of assembly, monomer and homodimer. Interacts with CXADR. Interacts presynaptically with the glutamate receptors GRIA2, GRIA3, GRIK3, isoform 3 of GRIA4, isoform A of GRM4, GRM7 and GRM8; with NAPA and NAPB; and with BTG2. The interaction with NAPA and NAPB disrupts the interaction with GRIA2, conducting to the internalization of GRIA2. Interacts with PRKCA; with the amine transporters SLC6A2 and SLC6A3; with the channels ASIC1 and ASIC2; with the GTP-binding proteins ARF1 and ARF3; with the ephrin receptor tyrosine kinases EPHA7, EPHB1 and EPHB2; with ERBB2 and through its PDZ domain with the C-terminal tail of PRLHR. Interacts with UNC5A. Interacts (via AH domain) with NCS1/FREQ; in a calcium-dependent manner. Interacts with F-actin and associates with the ARP2/3 complex. Interacts (via PDZ domain) with ARF1 (activated); the interaction blocks Arp2/3 complex inhibition. Interacts with SORCS3. In terms of processing, phosphorylation at Thr-82 appears to inhibit the interaction with AMPA receptors. Palmitoylation on Cys-413 is essential for long-term synaptic depression (LTD). As to expression, ubiquitous.

The protein resides in the cytoplasm. The protein localises to the perinuclear region. It localises to the membrane. It is found in the postsynaptic density. Its subcellular location is the synapse. The protein resides in the synaptosome. The protein localises to the cytoskeleton. Functionally, probable adapter protein that bind to and organize the subcellular localization of a variety of membrane proteins containing some PDZ recognition sequence. Involved in the clustering of various receptors, possibly by acting at the receptor internalization level. Plays a role in synaptic plasticity by regulating the trafficking and internalization of AMPA receptors. May be regulated upon PRKCA activation. May regulate ASIC1/ASIC3 channel. Regulates actin polymerization by inhibiting the actin-nucleating activity of the Arp2/3 complex; the function is competitive with nucleation promoting factors and is linked to neuronal morphology regulation and AMPA receptor (AMPAR) endocytosis. Via interaction with the Arp2/3 complex involved in regulation of synaptic plasicity of excitatory synapses and required for spine shrinkage during long-term depression (LTD). Involved in regulation of astrocyte morphology, antagonistic to Arp2/3 complex activator WASL/N-WASP function. The protein is PRKCA-binding protein (PICK1) of Homo sapiens (Human).